The following is a 531-amino-acid chain: T-complex protein 1 subunit zeta (531 aa).

At Ala-2 the chain carries N-acetylalanine. The residue at position 5 (Lys-5) is an N6-acetyllysine. An ADP-binding site is contributed by Gly-39. Gly-39 provides a ligand contact to ATP. Asp-90 contributes to the Mg(2+) binding site. Positions 91, 92, 93, 94, 158, and 159 each coordinate ADP. Residues Gly-91, Thr-92, and Thr-93 each coordinate ATP. At Lys-199 the chain carries N6-acetyllysine. A Phosphoserine modification is found at Ser-205. A Glycyl lysine isopeptide (Lys-Gly) (interchain with G-Cter in SUMO2) cross-link involves residue Lys-251. Lys-287, Lys-365, Lys-377, and Lys-388 each carry N6-acetyllysine. ADP is bound at residue Ala-411. ATP is bound by residues Ala-411, Gly-412, Asp-496, and Lys-501. Asp-496 serves as a coordination point for ADP.

The protein belongs to the TCP-1 chaperonin family. In terms of assembly, component of the chaperonin-containing T-complex (TRiC), a hexadecamer composed of two identical back-to-back stacked rings enclosing a protein folding chamber. Each ring is made up of eight different subunits: TCP1/CCT1, CCT2, CCT3, CCT4, CCT5, CCT6A/CCT6, CCT7, CCT8. Interacts with PACRG.

It localises to the cytoplasm. It carries out the reaction ATP + H2O = ADP + phosphate + H(+). Functionally, component of the chaperonin-containing T-complex (TRiC), a molecular chaperone complex that assists the folding of actin, tubulin and other proteins upon ATP hydrolysis. The TRiC complex mediates the folding of WRAP53/TCAB1, thereby regulating telomere maintenance. This Bos taurus (Bovine) protein is T-complex protein 1 subunit zeta (CCT6A).